We begin with the raw amino-acid sequence, 785 residues long: Leucyl aminopeptidase (785 aa).

Residues Glu106 and 238–242 contribute to the substrate site; that span reads GAMEN. A Zn(2+)-binding site is contributed by His273. Glu274 functions as the Proton acceptor in the catalytic mechanism. The Zn(2+) site is built by His277 and Glu296.

This sequence belongs to the peptidase M1 family. Co-immunoprecipitates with the 60 kDa chaperonin. The cofactor is Zn(2+). Post-translationally, can be phosphorylated by cell extracts.

It localises to the cytoplasm. It carries out the reaction Release of an N-terminal amino acid, Xaa-|-Yaa-, in which Xaa is preferably Leu, but may be other amino acids including Pro although not Arg or Lys, and Yaa may be Pro. Amino acid amides and methyl esters are also readily hydrolyzed, but rates on arylamides are exceedingly low.. Its function is as follows. Preferentially acts as a leucyl-aminopeptidase, although it also has activity against other substrates. This is Leucyl aminopeptidase (ape2) from Saccharolobus solfataricus (strain ATCC 35092 / DSM 1617 / JCM 11322 / P2) (Sulfolobus solfataricus).